Reading from the N-terminus, the 701-residue chain is Elongation factor G (701 aa).

The region spanning Ser8–Val291 is the tr-type G domain. GTP contacts are provided by residues Ala17–Thr24, Asp89–His93, and Asn143–Asp146.

The protein belongs to the TRAFAC class translation factor GTPase superfamily. Classic translation factor GTPase family. EF-G/EF-2 subfamily.

The protein resides in the cytoplasm. Catalyzes the GTP-dependent ribosomal translocation step during translation elongation. During this step, the ribosome changes from the pre-translocational (PRE) to the post-translocational (POST) state as the newly formed A-site-bound peptidyl-tRNA and P-site-bound deacylated tRNA move to the P and E sites, respectively. Catalyzes the coordinated movement of the two tRNA molecules, the mRNA and conformational changes in the ribosome. In Pseudomonas fluorescens (strain SBW25), this protein is Elongation factor G.